The sequence spans 453 residues: Secreted triacylglycerol lipase LIP2 (453 aa).

Residues 1–19 form the signal peptide; it reads MKLSLVVLTLISVAAQALA. N-linked (GlcNAc...) asparagine glycosylation occurs at asparagine 98. Cysteine 115 and cysteine 284 form a disulfide bridge. Serine 197 functions as the Nucleophile in the catalytic mechanism. N-linked (GlcNAc...) asparagine glycosylation is present at asparagine 230. Catalysis depends on residues aspartate 344 and histidine 378. Cysteine 360 and cysteine 406 are disulfide-bonded.

This sequence belongs to the AB hydrolase superfamily. Lipase family. Class Lip subfamily.

The protein resides in the secreted. It catalyses the reaction a triacylglycerol + H2O = a diacylglycerol + a fatty acid + H(+). It carries out the reaction a monoacylglycerol + H2O = glycerol + a fatty acid + H(+). The catalysed reaction is a diacylglycerol + H2O = a monoacylglycerol + a fatty acid + H(+). Its activity is regulated as follows. The activity is significantly increased in the presence of Triton X-100 and partially inhibited by PMSF but unaffected by univalent and divalent metal ions. Activity is significantly decreased in acetate buffer compared to that in citrate buffer at the same pH. In terms of biological role, major secreted lipase involved in Dandruff and seborrheic dermatitis (D/SD) probably via lipase-mediated breakdown of sebaceous lipids and release of irritating free fatty acids. Has triacylglycerol lipase activity and is able to hydrolyze triolein, tristearin, trilinolein, tripalmitoylglycerol and trihexadecenoin. Hydrolyze diacylglycerols such as distearin, dilinolein, dipalmitoylglycerol and dipalmitolein. Shows high esterase activity against 4-nitrophenyl palmitate and 1-naphthyl palmitate but not 1-naphthyl acetate, suggesting that it specifically recognizes fatty acids. Mostly converts monoolein to di- and triolein, while free fatty acids are only produced in low amounts. The chain is Secreted triacylglycerol lipase LIP2 from Malassezia globosa (strain ATCC MYA-4612 / CBS 7966) (Dandruff-associated fungus).